A 422-amino-acid chain; its full sequence is Ubiquitin-conjugating enzyme E2 Q1 (422 aa).

At Met1 the chain carries N-acetylmethionine. The segment covering 1–15 has biased composition (low complexity); it reads MQQPQPQGQQQPGPG. Disordered stretches follow at residues 1–40 and 174–221; these read MQQP…PGPC and PLPA…EDDG. Over residues 16–35 the composition is skewed to gly residues; that stretch reads QQLGGQGAAPGAGGGPGGGP. Residues 185–200 show a composition bias toward acidic residues; sequence VSSEDEDEEMPEDTED. The span at 212–221 shows a compositional bias: basic and acidic residues; the sequence is AEGKKSEDDG. One can recognise a UBC core domain in the interval 251-415; sequence QATDRLMKEL…VQIHEKNGWY (165 aa). Catalysis depends on Cys351, which acts as the Glycyl thioester intermediate.

The protein belongs to the ubiquitin-conjugating enzyme family. Monomer and homodimer. Only the homodimer is linked to ubiquitin through thiolester activation. Interacts (via N-terminus) with B4GALT1 (via N-terminal cytoplasmic domain). The interaction is direct. In terms of processing, autoubiquitinated in vitro in the presence of NEDD4L. Widely expressed.

The protein localises to the nucleus. It is found in the cell projection. Its subcellular location is the filopodium. The protein resides in the cytoplasm. It localises to the cytosol. The catalysed reaction is S-ubiquitinyl-[E1 ubiquitin-activating enzyme]-L-cysteine + [E2 ubiquitin-conjugating enzyme]-L-cysteine = [E1 ubiquitin-activating enzyme]-L-cysteine + S-ubiquitinyl-[E2 ubiquitin-conjugating enzyme]-L-cysteine.. The protein operates within protein modification; protein ubiquitination. Functionally, catalyzes the covalent attachment of ubiquitin to other proteins. May be involved in hormonal homeostasis in females. Involved in regulation of B4GALT1 cell surface expression, B4GALT1-mediated cell adhesion to laminin and embryoid body formation. This Homo sapiens (Human) protein is Ubiquitin-conjugating enzyme E2 Q1 (UBE2Q1).